Reading from the N-terminus, the 392-residue chain is Fasciculation and elongation protein zeta-1 (392 aa).

Residues Met-1 to His-36 are disordered. The residue at position 58 (Ser-58) is a Phosphoserine. The disordered stretch occupies residues Met-175–Ile-196. Positions Asp-180–Gly-194 are enriched in acidic residues. The stretch at Ser-230 to Ser-298 forms a coiled coil. A phosphoserine mark is found at Ser-298 and Ser-316.

This sequence belongs to the zygin family. As to quaternary structure, homodimer. Interacts with the NH2-terminal variable region (V1) of PKC zeta and weakly with that of PKC epsilon. Interacts with UBE4B and SAP30L. Interacts with SCOC and ULK1; SCOC interferes with ULK1-binding to FEZ1. Directly interacts with SCOC and UVRAG. Stabilizes the interaction between SCOC and UVRAG during amino acid starvation. Post-translationally, phosphorylated by protein kinase C zeta; which enhances interaction with UBE4B and polyubiquitination. In terms of processing, polyubiquitinated in a UBE4B-dependent manner; which does not lead to proteasomal degradation and may be important for neurogenic activity. Polyubiquitin linkage seems to be mainly through Lys-26.

The protein localises to the cytoplasm. The protein resides in the cytoskeleton. It is found in the microtubule organizing center. Its subcellular location is the centrosome. It localises to the cell membrane. Functionally, may be involved in axonal outgrowth as component of the network of molecules that regulate cellular morphology and axon guidance machinery. May participate in the transport of mitochondria and other cargos along microtubules. The chain is Fasciculation and elongation protein zeta-1 (Fez1) from Mus musculus (Mouse).